Reading from the N-terminus, the 545-residue chain is Calcium-dependent protein kinase 10 (545 aa).

The segment at 1 to 36 is disordered; it reads MGNCNACVRPDSKESKPSSKPKKPNRDRKLNPFAGD. G2 is lipidated: N-myristoyl glycine. The region spanning 63–321 is the Protein kinase domain; sequence YILGRELGRG…AQQVLAHPWI (259 aa). Residues 69–77 and K92 each bind ATP; that span reads LGRGEFGIT. Residue D187 is the Proton acceptor of the active site. At S227 the chain carries Phosphoserine. Residues 327 to 357 form an autoinhibitory domain region; sequence APNVPLGDIVRSRLKQFSMMNRFKKKVLRVI. EF-hand domains follow at residues 364–399, 400–435, 436–471, and 472–507; these read QEVE…VGSQ, LGEP…LQKI, ENDE…ELGE, and PDAS…GTDW. Residues D377, D379, D381, K383, E388, D413, D415, N417, E424, D449, D451, S453, Y455, E460, D485, D487, D489, R491, and E496 each coordinate Ca(2+).

This sequence belongs to the protein kinase superfamily. Ser/Thr protein kinase family. CDPK subfamily.

It is found in the membrane. The enzyme catalyses L-seryl-[protein] + ATP = O-phospho-L-seryl-[protein] + ADP + H(+). It catalyses the reaction L-threonyl-[protein] + ATP = O-phospho-L-threonyl-[protein] + ADP + H(+). Its activity is regulated as follows. Activated by calcium. Autophosphorylation may play an important role in the regulation of the kinase activity. Functionally, may play a role in signal transduction pathways that involve calcium as a second messenger. May be a positive regulator controlling stress signal transduction. In Arabidopsis thaliana (Mouse-ear cress), this protein is Calcium-dependent protein kinase 10 (CPK10).